Here is a 156-residue protein sequence, read N- to C-terminus: Small ribosomal subunit protein uS7 (156 aa).

The protein belongs to the universal ribosomal protein uS7 family. As to quaternary structure, part of the 30S ribosomal subunit. Contacts proteins S9 and S11.

Functionally, one of the primary rRNA binding proteins, it binds directly to 16S rRNA where it nucleates assembly of the head domain of the 30S subunit. Is located at the subunit interface close to the decoding center, probably blocks exit of the E-site tRNA. This Clavibacter michiganensis subsp. michiganensis (strain NCPPB 382) protein is Small ribosomal subunit protein uS7.